A 40-amino-acid polypeptide reads, in one-letter code: DCPSDWSSYDEHCYRVFQQKMNWEDAEKFCTQQHKGXHLX.

An intrachain disulfide couples Cys-2 to Cys-13. In terms of domain architecture, C-type lectin spans 9–40; that stretch reads YDEHCYRVFQQKMNWEDAEKFCTQQHKGXHLX.

Belongs to the snaclec family. As to quaternary structure, heterodimer of subunits alpha and beta; disulfide-linked. In terms of tissue distribution, expressed by the venom gland.

Its subcellular location is the secreted. Platelet antagonist that specifically and reversibly binds to a site on platelet glycoprotein Ibalpha (GP1BA) close to or identical with the site for vWF binding. It inhibits the binding of vWF to platelets and vWF-dependent shear-induced platelet aggregation. The protein is Snaclec tokaracetin subunit beta of Protobothrops tokarensis (Tokara habu).